Consider the following 261-residue polypeptide: Cytochrome c oxidase subunit 3 (261 aa).

The Mitochondrial matrix segment spans residues 1–15 (MTHQTHACHMVNPSP). Residues 16–34 (WPLTGALSGLLMTSGLIMW) traverse the membrane as a helical segment. The Mitochondrial intermembrane segment spans residues 35 to 40 (FHFNST). A helical membrane pass occupies residues 41–66 (TLLMLGLTTNMLTMYQWWRDVIREST). Residues 67–72 (FQGHHT) are Mitochondrial matrix-facing. Residues 73–105 (PNVQKGLRYGMILFIISEVLFFTGFFWAFYHSS) form a helical membrane-spanning segment. Residues 106–128 (LAPTPELGGCWPPTGIHPLNPLE) lie on the Mitochondrial intermembrane side of the membrane. A helical membrane pass occupies residues 129–152 (VPLLNTSVLLASGVSITWAHHSLM). Topologically, residues 153 to 155 (EGN) are mitochondrial matrix. The helical transmembrane segment at 156–183 (RNHMLQALFITIALGVYFTLLQASEYYE) threads the bilayer. Topologically, residues 184-190 (APFTISD) are mitochondrial intermembrane. The helical transmembrane segment at 191–223 (GVYGSTFFVATGFHGLHVIIGSTFLIVCFFRQL) threads the bilayer. Topologically, residues 224 to 232 (KFHFTSSHH) are mitochondrial matrix. A helical transmembrane segment spans residues 233–256 (FGFEAAAWYWHFVDVVWLFLYVSI). Residues 257-261 (YWWGS) are Mitochondrial intermembrane-facing.

The protein belongs to the cytochrome c oxidase subunit 3 family. As to quaternary structure, component of the cytochrome c oxidase (complex IV, CIV), a multisubunit enzyme composed of 14 subunits. The complex is composed of a catalytic core of 3 subunits MT-CO1, MT-CO2 and MT-CO3, encoded in the mitochondrial DNA, and 11 supernumerary subunits COX4I, COX5A, COX5B, COX6A, COX6B, COX6C, COX7A, COX7B, COX7C, COX8 and NDUFA4, which are encoded in the nuclear genome. The complex exists as a monomer or a dimer and forms supercomplexes (SCs) in the inner mitochondrial membrane with NADH-ubiquinone oxidoreductase (complex I, CI) and ubiquinol-cytochrome c oxidoreductase (cytochrome b-c1 complex, complex III, CIII), resulting in different assemblies (supercomplex SCI(1)III(2)IV(1) and megacomplex MCI(2)III(2)IV(2)).

Its subcellular location is the mitochondrion inner membrane. It catalyses the reaction 4 Fe(II)-[cytochrome c] + O2 + 8 H(+)(in) = 4 Fe(III)-[cytochrome c] + 2 H2O + 4 H(+)(out). Functionally, component of the cytochrome c oxidase, the last enzyme in the mitochondrial electron transport chain which drives oxidative phosphorylation. The respiratory chain contains 3 multisubunit complexes succinate dehydrogenase (complex II, CII), ubiquinol-cytochrome c oxidoreductase (cytochrome b-c1 complex, complex III, CIII) and cytochrome c oxidase (complex IV, CIV), that cooperate to transfer electrons derived from NADH and succinate to molecular oxygen, creating an electrochemical gradient over the inner membrane that drives transmembrane transport and the ATP synthase. Cytochrome c oxidase is the component of the respiratory chain that catalyzes the reduction of oxygen to water. Electrons originating from reduced cytochrome c in the intermembrane space (IMS) are transferred via the dinuclear copper A center (CU(A)) of subunit 2 and heme A of subunit 1 to the active site in subunit 1, a binuclear center (BNC) formed by heme A3 and copper B (CU(B)). The BNC reduces molecular oxygen to 2 water molecules using 4 electrons from cytochrome c in the IMS and 4 protons from the mitochondrial matrix. The polypeptide is Cytochrome c oxidase subunit 3 (MT-CO3) (Gazella saudiya (Saudi gazelle)).